We begin with the raw amino-acid sequence, 108 residues long: Hrp pili protein HrpA (108 aa).

Residues 41–56 (NTGSTDSIDATRSSIS) are compositionally biased toward polar residues. The tract at residues 41–72 (NTGSTDSIDATRSSISKGDAKSAELDGTANEE) is disordered.

The protein belongs to the HrpA type 1 family.

The protein localises to the secreted. It is found in the fimbrium. Its function is as follows. Major structural protein of the hrp pilus, which is a component of the type III secretion system (T3SS, Hrp secretion system) required for effector protein delivery, parasitism, and pathogenicity. The hrp pilus functions as a conduit for protein delivery into the host cell. Also, affects the expression of T3SS-associated genes. Required for full expression of genes that encode regulatory, secretion, and effector proteins of the T3SS. HrpA-mediated gene regulation apparently is through effect on the mRNA level of hrpR and hrpS. This is Hrp pili protein HrpA (hrpA) from Pseudomonas savastanoi pv. phaseolicola (Pseudomonas syringae pv. phaseolicola).